Here is a 290-residue protein sequence, read N- to C-terminus: ATP synthase gamma chain (290 aa).

This sequence belongs to the ATPase gamma chain family. As to quaternary structure, F-type ATPases have 2 components, CF(1) - the catalytic core - and CF(0) - the membrane proton channel. CF(1) has five subunits: alpha(3), beta(3), gamma(1), delta(1), epsilon(1). CF(0) has three main subunits: a, b and c.

The protein localises to the cell inner membrane. In terms of biological role, produces ATP from ADP in the presence of a proton gradient across the membrane. The gamma chain is believed to be important in regulating ATPase activity and the flow of protons through the CF(0) complex. The protein is ATP synthase gamma chain of Dinoroseobacter shibae (strain DSM 16493 / NCIMB 14021 / DFL 12).